We begin with the raw amino-acid sequence, 554 residues long: Carboxylesterase 1C (554 aa).

An N-terminal signal peptide occupies residues 1-18 (MWLHALVWASLAVCPILG). A glycan (N-linked (GlcNAc...) asparagine) is linked at Asn79. The cysteines at positions 87 and 116 are disulfide-linked. Catalysis depends on Ser221, which acts as the Acyl-ester intermediate. Cys273 and Cys284 are joined by a disulfide. Asn274 and Asn304 each carry an N-linked (GlcNAc...) asparagine glycan. Glu342 acts as the Charge relay system in catalysis. Residue Asn377 is glycosylated (N-linked (GlcNAc...) asparagine). Catalysis depends on His455, which acts as the Charge relay system. Position 473 is a phosphoserine (Ser473). N-linked (GlcNAc...) asparagine glycosylation occurs at Asn478. A Prevents secretion from ER motif is present at residues 551-554 (TEHK).

This sequence belongs to the type-B carboxylesterase/lipase family. Expressed in lung, kidney and liver.

It localises to the endoplasmic reticulum lumen. The catalysed reaction is a carboxylic ester + H2O = an alcohol + a carboxylate + H(+). Its function is as follows. Involved in the detoxification of xenobiotics and in the activation of ester and amide prodrugs. Involved in the extracellular metabolism of lung surfactant. The sequence is that of Carboxylesterase 1C (Ces1c) from Mus musculus (Mouse).